Consider the following 142-residue polypeptide: Nucleoside diphosphate kinase (142 aa).

Residues lysine 10, phenylalanine 58, arginine 86, threonine 92, arginine 103, and asparagine 113 each contribute to the ATP site. The active-site Pros-phosphohistidine intermediate is the histidine 116.

It belongs to the NDK family. In terms of assembly, homotetramer. Mg(2+) serves as cofactor.

The protein localises to the cytoplasm. The enzyme catalyses a 2'-deoxyribonucleoside 5'-diphosphate + ATP = a 2'-deoxyribonucleoside 5'-triphosphate + ADP. It catalyses the reaction a ribonucleoside 5'-diphosphate + ATP = a ribonucleoside 5'-triphosphate + ADP. Major role in the synthesis of nucleoside triphosphates other than ATP. The ATP gamma phosphate is transferred to the NDP beta phosphate via a ping-pong mechanism, using a phosphorylated active-site intermediate. The polypeptide is Nucleoside diphosphate kinase (Ehrlichia chaffeensis (strain ATCC CRL-10679 / Arkansas)).